The primary structure comprises 264 residues: Thymidylate synthase (264 aa).

Arg21 serves as a coordination point for dUMP. His51 provides a ligand contact to (6R)-5,10-methylene-5,6,7,8-tetrahydrofolate. 126 to 127 (RR) contacts dUMP. Cys146 (nucleophile) is an active-site residue. Residues 166–169 (RSAD), Asn177, and 207–209 (HLY) contribute to the dUMP site. A (6R)-5,10-methylene-5,6,7,8-tetrahydrofolate-binding site is contributed by Asp169. (6R)-5,10-methylene-5,6,7,8-tetrahydrofolate is bound at residue Ala263.

The protein belongs to the thymidylate synthase family. Bacterial-type ThyA subfamily. In terms of assembly, homodimer.

The protein resides in the cytoplasm. It catalyses the reaction dUMP + (6R)-5,10-methylene-5,6,7,8-tetrahydrofolate = 7,8-dihydrofolate + dTMP. The protein operates within pyrimidine metabolism; dTTP biosynthesis. Functionally, catalyzes the reductive methylation of 2'-deoxyuridine-5'-monophosphate (dUMP) to 2'-deoxythymidine-5'-monophosphate (dTMP) while utilizing 5,10-methylenetetrahydrofolate (mTHF) as the methyl donor and reductant in the reaction, yielding dihydrofolate (DHF) as a by-product. This enzymatic reaction provides an intracellular de novo source of dTMP, an essential precursor for DNA biosynthesis. The sequence is that of Thymidylate synthase from Legionella pneumophila (strain Corby).